Reading from the N-terminus, the 245-residue chain is Ribonuclease PH (245 aa).

Phosphate-binding positions include R86 and 124–126 (GTR).

It belongs to the RNase PH family. Homohexameric ring arranged as a trimer of dimers.

The catalysed reaction is tRNA(n+1) + phosphate = tRNA(n) + a ribonucleoside 5'-diphosphate. Functionally, phosphorolytic 3'-5' exoribonuclease that plays an important role in tRNA 3'-end maturation. Removes nucleotide residues following the 3'-CCA terminus of tRNAs; can also add nucleotides to the ends of RNA molecules by using nucleoside diphosphates as substrates, but this may not be physiologically important. Probably plays a role in initiation of 16S rRNA degradation (leading to ribosome degradation) during starvation. In Bacillus cereus (strain B4264), this protein is Ribonuclease PH.